We begin with the raw amino-acid sequence, 372 residues long: 4-hydroxy-3-methylbut-2-en-1-yl diphosphate synthase (flavodoxin) (372 aa).

Cysteine 270, cysteine 273, cysteine 305, and glutamate 312 together coordinate [4Fe-4S] cluster.

It belongs to the IspG family. [4Fe-4S] cluster serves as cofactor.

The enzyme catalyses (2E)-4-hydroxy-3-methylbut-2-enyl diphosphate + oxidized [flavodoxin] + H2O + 2 H(+) = 2-C-methyl-D-erythritol 2,4-cyclic diphosphate + reduced [flavodoxin]. It participates in isoprenoid biosynthesis; isopentenyl diphosphate biosynthesis via DXP pathway; isopentenyl diphosphate from 1-deoxy-D-xylulose 5-phosphate: step 5/6. In terms of biological role, converts 2C-methyl-D-erythritol 2,4-cyclodiphosphate (ME-2,4cPP) into 1-hydroxy-2-methyl-2-(E)-butenyl 4-diphosphate. The sequence is that of 4-hydroxy-3-methylbut-2-en-1-yl diphosphate synthase (flavodoxin) from Salmonella paratyphi B (strain ATCC BAA-1250 / SPB7).